The primary structure comprises 95 residues: Co-chaperonin GroES (95 aa).

This sequence belongs to the GroES chaperonin family. In terms of assembly, heptamer of 7 subunits arranged in a ring. Interacts with the chaperonin GroEL.

The protein resides in the cytoplasm. In terms of biological role, together with the chaperonin GroEL, plays an essential role in assisting protein folding. The GroEL-GroES system forms a nano-cage that allows encapsulation of the non-native substrate proteins and provides a physical environment optimized to promote and accelerate protein folding. GroES binds to the apical surface of the GroEL ring, thereby capping the opening of the GroEL channel. The protein is Co-chaperonin GroES of Xanthomonas axonopodis pv. citri (strain 306).